A 379-amino-acid polypeptide reads, in one-letter code: Cytochrome b (379 aa).

4 helical membrane passes run 33-53 (FGSL…FLDM), 77-98 (WLIR…YLHI), 113-133 (WNIG…GYVL), and 178-198 (FFAF…VHLL). Heme b contacts are provided by His-83 and His-97. Residues His-182 and His-196 each contribute to the heme b site. Position 201 (His-201) interacts with a ubiquinone. A run of 4 helical transmembrane segments spans residues 226 to 246 (TKDF…VPFF), 288 to 308 (LGGV…PHIQ), 320 to 340 (ISQF…WIGG), and 347 to 367 (FIII…VLMP).

The protein belongs to the cytochrome b family. As to quaternary structure, the cytochrome bc1 complex contains 11 subunits: 3 respiratory subunits (MT-CYB, CYC1 and UQCRFS1), 2 core proteins (UQCRC1 and UQCRC2) and 6 low-molecular weight proteins (UQCRH/QCR6, UQCRB/QCR7, UQCRQ/QCR8, UQCR10/QCR9, UQCR11/QCR10 and a cleavage product of UQCRFS1). This cytochrome bc1 complex then forms a dimer. It depends on heme b as a cofactor.

Its subcellular location is the mitochondrion inner membrane. Component of the ubiquinol-cytochrome c reductase complex (complex III or cytochrome b-c1 complex) that is part of the mitochondrial respiratory chain. The b-c1 complex mediates electron transfer from ubiquinol to cytochrome c. Contributes to the generation of a proton gradient across the mitochondrial membrane that is then used for ATP synthesis. The polypeptide is Cytochrome b (MT-CYB) (Dipodomys nelsoni (Nelson's kangaroo rat)).